Here is a 480-residue protein sequence, read N- to C-terminus: Aspartyl/glutamyl-tRNA(Asn/Gln) amidotransferase subunit B (480 aa).

This sequence belongs to the GatB/GatE family. GatB subfamily. In terms of assembly, heterotrimer of A, B and C subunits.

The catalysed reaction is L-glutamyl-tRNA(Gln) + L-glutamine + ATP + H2O = L-glutaminyl-tRNA(Gln) + L-glutamate + ADP + phosphate + H(+). It carries out the reaction L-aspartyl-tRNA(Asn) + L-glutamine + ATP + H2O = L-asparaginyl-tRNA(Asn) + L-glutamate + ADP + phosphate + 2 H(+). Its function is as follows. Allows the formation of correctly charged Asn-tRNA(Asn) or Gln-tRNA(Gln) through the transamidation of misacylated Asp-tRNA(Asn) or Glu-tRNA(Gln) in organisms which lack either or both of asparaginyl-tRNA or glutaminyl-tRNA synthetases. The reaction takes place in the presence of glutamine and ATP through an activated phospho-Asp-tRNA(Asn) or phospho-Glu-tRNA(Gln). In Streptococcus pneumoniae (strain Hungary19A-6), this protein is Aspartyl/glutamyl-tRNA(Asn/Gln) amidotransferase subunit B.